The primary structure comprises 296 residues: GTPase Era (296 aa).

The Era-type G domain occupies 7–174; the sequence is KCSMNAIVGT…INYLCEISPS (168 aa). Residues 15–22 are G1; that stretch reads GTTNAGKS. Residue 15-22 participates in GTP binding; the sequence is GTTNAGKS. Residues 41–45 form a G2 region; the sequence is QTTRV. Residues 62 to 65 form a G3 region; that stretch reads DTPG. GTP-binding positions include 62–66 and 124–127; these read DTPGI and NKID. The interval 124-127 is G4; it reads NKID. A G5 region spans residues 153 to 155; it reads ISA. The 78-residue stretch at 205 to 282 folds into the KH type-2 domain; it reads LHHELPYSLS…HLFLFVKVRE (78 aa).

It belongs to the TRAFAC class TrmE-Era-EngA-EngB-Septin-like GTPase superfamily. Era GTPase family. Monomer.

The protein localises to the cytoplasm. It localises to the cell inner membrane. Functionally, an essential GTPase that binds both GDP and GTP, with rapid nucleotide exchange. Plays a role in 16S rRNA processing and 30S ribosomal subunit biogenesis and possibly also in cell cycle regulation and energy metabolism. The sequence is that of GTPase Era from Ehrlichia canis (strain Jake).